Reading from the N-terminus, the 171-residue chain is Ribosome maturation factor RimP (171 aa).

It belongs to the RimP family.

The protein localises to the cytoplasm. Its function is as follows. Required for maturation of 30S ribosomal subunits. This is Ribosome maturation factor RimP from Anaeromyxobacter dehalogenans (strain 2CP-C).